We begin with the raw amino-acid sequence, 572 residues long: Proline--tRNA ligase (572 aa).

Belongs to the class-II aminoacyl-tRNA synthetase family. ProS type 1 subfamily. In terms of assembly, homodimer.

The protein resides in the cytoplasm. It catalyses the reaction tRNA(Pro) + L-proline + ATP = L-prolyl-tRNA(Pro) + AMP + diphosphate. In terms of biological role, catalyzes the attachment of proline to tRNA(Pro) in a two-step reaction: proline is first activated by ATP to form Pro-AMP and then transferred to the acceptor end of tRNA(Pro). As ProRS can inadvertently accommodate and process non-cognate amino acids such as alanine and cysteine, to avoid such errors it has two additional distinct editing activities against alanine. One activity is designated as 'pretransfer' editing and involves the tRNA(Pro)-independent hydrolysis of activated Ala-AMP. The other activity is designated 'posttransfer' editing and involves deacylation of mischarged Ala-tRNA(Pro). The misacylated Cys-tRNA(Pro) is not edited by ProRS. This Photorhabdus laumondii subsp. laumondii (strain DSM 15139 / CIP 105565 / TT01) (Photorhabdus luminescens subsp. laumondii) protein is Proline--tRNA ligase.